The primary structure comprises 99 residues: Probable small ribosomal subunit protein cS23 (99 aa).

It belongs to the chloroplast-specific ribosomal protein cS23 family. In terms of assembly, part of the 30S ribosomal subunit.

Functionally, probably a ribosomal protein or a ribosome-associated protein. The protein is Probable small ribosomal subunit protein cS23 of Synechococcus sp. (strain JA-2-3B'a(2-13)) (Cyanobacteria bacterium Yellowstone B-Prime).